The primary structure comprises 242 residues: Proteasome subunit alpha (242 aa).

The protein belongs to the peptidase T1A family. The 20S proteasome core is composed of 14 alpha and 14 beta subunits that assemble into four stacked heptameric rings, resulting in a barrel-shaped structure. The two inner rings, each composed of seven catalytic beta subunits, are sandwiched by two outer rings, each composed of seven alpha subunits. The catalytic chamber with the active sites is on the inside of the barrel. Has a gated structure, the ends of the cylinder being occluded by the N-termini of the alpha-subunits. Is capped by the proteasome-associated ATPase, ARC.

The protein resides in the cytoplasm. It participates in protein degradation; proteasomal Pup-dependent pathway. The formation of the proteasomal ATPase ARC-20S proteasome complex, likely via the docking of the C-termini of ARC into the intersubunit pockets in the alpha-rings, may trigger opening of the gate for substrate entry. Interconversion between the open-gate and close-gate conformations leads to a dynamic regulation of the 20S proteasome proteolysis activity. Functionally, component of the proteasome core, a large protease complex with broad specificity involved in protein degradation. This chain is Proteasome subunit alpha, found in Renibacterium salmoninarum (strain ATCC 33209 / DSM 20767 / JCM 11484 / NBRC 15589 / NCIMB 2235).